Reading from the N-terminus, the 585-residue chain is MYRLVSNVASKARIARKCTSQIGSRLNSTRNYAAKDIRFGVEARALMLRGVEDLADAVKVTMGPKGRNVIIEQSWGAPKVTKDGVTVAKSIEFKDRIKNVGASLVKQVANATNDVAGDGTTCATVLTRAIFTEGCKSVAAGMNAMDLRRGIKLAVDTVVTNLQSRARMISTSEEIAQVGTISANGDREIGELIAKAMETVGKEGVITIQDGKTLFNELEVVEGMKIDRGYISPYFITNPKTQKCELEDPLILIHEKKISNINAMVKVLELALKKQRPLLIVAEDVESDALATLILNKLRANIKVCAVKAPGFGENRKANLHDLAALTGAQVITEELGMNLDNIDLSMFGNCKKVTVSKDDTVVLDGAGDKQAIGERCEQIRSMVEASTSDYDKEKLQERLAKLSGGVAVLKIGGASETEVSEKKDRVTDALNATKAAVEEGIVPGGGVALLYASKELEKLSTANFDQKIGVQIIQNALKTPVYTIASNAGVEGAVVVGKLLEQDNPDLGYDAAKGEYVDMIKAGIIDPLKVIRTALVDAASVSSLLTTTEAVVTEIPTKEVASPGMGGGGMGGMGGMGGMGGMGF.

The N-terminal 32 residues, Met-1–Tyr-32, are a transit peptide targeting the mitochondrion.

Belongs to the chaperonin (HSP60) family.

The protein localises to the mitochondrion. Implicated in mitochondrial protein import and macromolecular assembly. May facilitate the correct folding of imported proteins. May also prevent misfolding and promote the refolding and proper assembly of unfolded polypeptides generated under stress conditions in the mitochondrial matrix. This Arabidopsis thaliana (Mouse-ear cress) protein is Chaperonin CPN60-like 1, mitochondrial.